The chain runs to 494 residues: Alpha-amylase-related protein (494 aa).

The N-terminal stretch at 1–20 (MIKFALALTLCLAGASLSLA) is a signal peptide. Gln21 carries the pyrrolidone carboxylic acid modification. A disulfide bridge connects residues Cys48 and Cys104. Ca(2+) is bound by residues Asn118, Gln169, and Asp178. Cys157 and Cys171 are disulfide-bonded. A chloride-binding site is contributed by Arg206. Asp208 acts as the Nucleophile in catalysis. His212 contributes to the Ca(2+) binding site. Glu245 functions as the Proton donor in the catalytic mechanism. Residues Asn308 and Arg343 each coordinate chloride. Cystine bridges form between Cys376–Cys382, Cys418–Cys441, and Cys448–Cys460.

Belongs to the glycosyl hydrolase 13 family. In terms of assembly, monomer. Requires Ca(2+) as cofactor. Chloride serves as cofactor.

It localises to the secreted. The enzyme catalyses Endohydrolysis of (1-&gt;4)-alpha-D-glucosidic linkages in polysaccharides containing three or more (1-&gt;4)-alpha-linked D-glucose units.. In Drosophila serrata (Fruit fly), this protein is Alpha-amylase-related protein (Amyrel).